Here is a 347-residue protein sequence, read N- to C-terminus: S-adenosylmethionine:tRNA ribosyltransferase-isomerase (347 aa).

This sequence belongs to the QueA family. As to quaternary structure, monomer.

It is found in the cytoplasm. The catalysed reaction is 7-aminomethyl-7-carbaguanosine(34) in tRNA + S-adenosyl-L-methionine = epoxyqueuosine(34) in tRNA + adenine + L-methionine + 2 H(+). The protein operates within tRNA modification; tRNA-queuosine biosynthesis. Its function is as follows. Transfers and isomerizes the ribose moiety from AdoMet to the 7-aminomethyl group of 7-deazaguanine (preQ1-tRNA) to give epoxyqueuosine (oQ-tRNA). This chain is S-adenosylmethionine:tRNA ribosyltransferase-isomerase, found in Ectopseudomonas mendocina (strain ymp) (Pseudomonas mendocina).